Reading from the N-terminus, the 444-residue chain is Phosphoglucosamine mutase (444 aa).

The active-site Phosphoserine intermediate is Ser-100. Mg(2+)-binding residues include Ser-100, Asp-240, Asp-242, and Asp-244. The residue at position 100 (Ser-100) is a Phosphoserine.

It belongs to the phosphohexose mutase family. The cofactor is Mg(2+). Post-translationally, activated by phosphorylation.

The catalysed reaction is alpha-D-glucosamine 1-phosphate = D-glucosamine 6-phosphate. Its function is as follows. Catalyzes the conversion of glucosamine-6-phosphate to glucosamine-1-phosphate. This chain is Phosphoglucosamine mutase, found in Desulforamulus reducens (strain ATCC BAA-1160 / DSM 100696 / MI-1) (Desulfotomaculum reducens).